A 363-amino-acid chain; its full sequence is Ribosomal RNA large subunit methyltransferase M (363 aa).

Residues S190, 223-226 (CPGG), D242, D262, and D279 each bind S-adenosyl-L-methionine. The Proton acceptor role is filled by K308.

It belongs to the class I-like SAM-binding methyltransferase superfamily. RNA methyltransferase RlmE family. RlmM subfamily. As to quaternary structure, monomer.

It is found in the cytoplasm. It carries out the reaction cytidine(2498) in 23S rRNA + S-adenosyl-L-methionine = 2'-O-methylcytidine(2498) in 23S rRNA + S-adenosyl-L-homocysteine + H(+). Its function is as follows. Catalyzes the 2'-O-methylation at nucleotide C2498 in 23S rRNA. The chain is Ribosomal RNA large subunit methyltransferase M from Aliivibrio salmonicida (strain LFI1238) (Vibrio salmonicida (strain LFI1238)).